A 609-amino-acid polypeptide reads, in one-letter code: Sodium- and chloride-dependent GABA transporter 2 (609 aa).

Polar residues predominate over residues 1 to 13 (MDSRASGTASNGE). The disordered stretch occupies residues 1–23 (MDSRASGTASNGETKPVYPVMEK). Over 1–40 (MDSRASGTASNGETKPVYPVMEKEEEEGTLERGHWNNKME) the chain is Cytoplasmic. 3 helical membrane passes run 41-61 (FVLSVAGEIIGLGNVWRFPYL), 68-88 (GAFFIPYLVFLFTCGVPVFLL), and 121-141 (IVILLNVYYIIVLAWALFYLF). Residues 142–206 (SSFTIDLPWG…GIQHLGALRW (65 aa)) lie on the Extracellular side of the membrane. A disulfide bridge links Cys-153 with Cys-162. N-linked (GlcNAc...) asparagine glycosylation is found at Asn-169 and Asn-173. A run of 2 helical transmembrane segments spans residues 207–227 (ELALCLLLAWVICYFCIWKGV) and 233–253 (VVYFTATFPYLMLVVLLIRGV). Asn-269 is a glycosylation site (N-linked (GlcNAc...) asparagine). Helical transmembrane passes span 282 to 302 (AGTQIFFSFAICLGCLTALGS), 319 to 339 (FLNSGTSFVAGFAIFSILGFM), 366 to 386 (VVMLPFSPLWACCFFFMVVLL), 418 to 438 (VLILGVSVVSFLVGLVMLTEG), 453 to 473 (GMCLLFVAIFESLCVAWVYGA), 490 to 510 (PLIKYCWLFLTPAVCTATFLF), and 528 to 548 (WWGDALGWLLALSSMVCIPAW). Over 549 to 609 (SLYRLGTLKG…LRLTELESHC (61 aa)) the chain is Cytoplasmic. Thr-594 bears the Phosphothreonine mark. Residue Ser-598 is modified to Phosphoserine.

Belongs to the sodium:neurotransmitter symporter (SNF) (TC 2.A.22) family. SLC6A13 subfamily.

The protein resides in the cell membrane. It is found in the basolateral cell membrane. It catalyses the reaction 4-aminobutanoate(out) + chloride(out) + 2 Na(+)(out) = 4-aminobutanoate(in) + chloride(in) + 2 Na(+)(in). The catalysed reaction is taurine(out) + chloride(out) + 2 Na(+)(out) = taurine(in) + chloride(in) + 2 Na(+)(in). It carries out the reaction beta-alanine(out) + chloride(out) + 2 Na(+)(out) = beta-alanine(in) + chloride(in) + 2 Na(+)(in). The enzyme catalyses hypotaurine(out) + chloride(out) + 2 Na(+)(out) = hypotaurine(in) + chloride(in) + 2 Na(+)(in). In terms of biological role, mediates sodium- and chloride-dependent transport of gamma-aminobutyric acid (GABA). Can also mediate transport of beta-alanine, taurine and hypotaurine. The chain is Sodium- and chloride-dependent GABA transporter 2 (SLC6A13) from Macaca fascicularis (Crab-eating macaque).